An 82-amino-acid chain; its full sequence is Cytochrome b559 subunit alpha (82 aa).

The helical transmembrane segment at 22-36 (IIHAVTLPAIFIAGF) threads the bilayer. Histidine 24 contacts heme.

This sequence belongs to the PsbE/PsbF family. As to quaternary structure, heterodimer of an alpha subunit and a beta subunit. PSII is composed of 1 copy each of membrane proteins PsbA, PsbB, PsbC, PsbD, PsbE, PsbF, PsbH, PsbI, PsbJ, PsbK, PsbL, PsbM, PsbT, PsbX, PsbY, Psb30/Ycf12, peripheral proteins PsbO, CyanoQ (PsbQ), PsbU, PsbV and a large number of cofactors. It forms dimeric complexes. Heme b serves as cofactor.

It is found in the cellular thylakoid membrane. This b-type cytochrome is tightly associated with the reaction center of photosystem II (PSII). PSII is a light-driven water:plastoquinone oxidoreductase that uses light energy to abstract electrons from H(2)O, generating O(2) and a proton gradient subsequently used for ATP formation. It consists of a core antenna complex that captures photons, and an electron transfer chain that converts photonic excitation into a charge separation. This is Cytochrome b559 subunit alpha from Prochlorococcus marinus (strain SARG / CCMP1375 / SS120).